The sequence spans 508 residues: Glycerol kinase (508 aa).

T14 serves as a coordination point for ADP. ATP-binding residues include T14, T15, and S16. T14 contacts sn-glycerol 3-phosphate. R18 is an ADP binding site. R84, E85, Y134, and D247 together coordinate sn-glycerol 3-phosphate. R84, E85, Y134, D247, and Q248 together coordinate glycerol. Residues T269 and G313 each coordinate ADP. Residues T269, G313, Q317, and G416 each coordinate ATP. G416 serves as a coordination point for ADP.

The protein belongs to the FGGY kinase family.

It carries out the reaction glycerol + ATP = sn-glycerol 3-phosphate + ADP + H(+). It functions in the pathway polyol metabolism; glycerol degradation via glycerol kinase pathway; sn-glycerol 3-phosphate from glycerol: step 1/1. Inhibited by fructose 1,6-bisphosphate (FBP). Functionally, key enzyme in the regulation of glycerol uptake and metabolism. Catalyzes the phosphorylation of glycerol to yield sn-glycerol 3-phosphate. The sequence is that of Glycerol kinase from Mycoplasmoides gallisepticum (strain R(low / passage 15 / clone 2)) (Mycoplasma gallisepticum).